We begin with the raw amino-acid sequence, 250 residues long: Pyrroloquinoline-quinone synthase (250 aa).

Belongs to the PqqC family.

The catalysed reaction is 6-(2-amino-2-carboxyethyl)-7,8-dioxo-1,2,3,4,7,8-hexahydroquinoline-2,4-dicarboxylate + 3 O2 = pyrroloquinoline quinone + 2 H2O2 + 2 H2O + H(+). The protein operates within cofactor biosynthesis; pyrroloquinoline quinone biosynthesis. Functionally, ring cyclization and eight-electron oxidation of 3a-(2-amino-2-carboxyethyl)-4,5-dioxo-4,5,6,7,8,9-hexahydroquinoline-7,9-dicarboxylic-acid to PQQ. In Xanthomonas axonopodis pv. citri (strain 306), this protein is Pyrroloquinoline-quinone synthase.